Reading from the N-terminus, the 222-residue chain is Putative thymidylate synthase (222 aa).

Cys-146 is an active-site residue.

Belongs to the thymidylate synthase family. Archaeal-type ThyA subfamily. As to quaternary structure, monomer.

The protein resides in the cytoplasm. Its pathway is pyrimidine metabolism; dTTP biosynthesis. Its function is as follows. May catalyze the biosynthesis of dTMP using an unknown cosubstrate. In Methanothermobacter thermautotrophicus (strain ATCC 29096 / DSM 1053 / JCM 10044 / NBRC 100330 / Delta H) (Methanobacterium thermoautotrophicum), this protein is Putative thymidylate synthase.